We begin with the raw amino-acid sequence, 667 residues long: DNA ligase (667 aa).

Residues 32 to 36, 81 to 82, and glutamate 110 each bind NAD(+); these read DSEYD and SL. Residue lysine 112 is the N6-AMP-lysine intermediate of the active site. Arginine 133, glutamate 167, lysine 283, and lysine 307 together coordinate NAD(+). Residues cysteine 401, cysteine 404, cysteine 419, and cysteine 424 each contribute to the Zn(2+) site. A BRCT domain is found at 586–667; the sequence is EGHPDFKDKT…FVQKQNEIEG (82 aa).

This sequence belongs to the NAD-dependent DNA ligase family. LigA subfamily. Mg(2+) is required as a cofactor. The cofactor is Mn(2+).

It carries out the reaction NAD(+) + (deoxyribonucleotide)n-3'-hydroxyl + 5'-phospho-(deoxyribonucleotide)m = (deoxyribonucleotide)n+m + AMP + beta-nicotinamide D-nucleotide.. DNA ligase that catalyzes the formation of phosphodiester linkages between 5'-phosphoryl and 3'-hydroxyl groups in double-stranded DNA using NAD as a coenzyme and as the energy source for the reaction. It is essential for DNA replication and repair of damaged DNA. The protein is DNA ligase of Staphylococcus saprophyticus subsp. saprophyticus (strain ATCC 15305 / DSM 20229 / NCIMB 8711 / NCTC 7292 / S-41).